The chain runs to 412 residues: MRGKLLPLAGLYLVQGLPYGLQSGLLPVLLRAGGLSLTRVGLAKVLYAPWLLKLAWAPLVDAQGSARAWVTRSTAGLGLVCGLLAGLPPPGAGQAGLPAAVAGLLLLLNLGAAMQDVALDALAVQLLEPAELGPGNTVQVVAYKLGAALAGGALLALLPTFSWPQLFLLLAATYWLAAALAWAAPALRRLPQQPPSEQRPHTAHLLRDVLAVPGTVWTAGFVLTYKLGEQGASSLFPLLLLDHGVSAPELGLWNGVGAVVCSIAGSSLGGTLLAKHWKLLPLLRSVLRFRLGGLACQTALVFHLDTLGASMDAGTILRGSALLSLCLQHFLGGLVTTVTFTGMMRCSQLAPRALQATHYSLLATLELLGKLLLGTLAGGLADGLGPHPCFLLLLILSAFPVLYLDLAPSTFL.

A run of 12 helical transmembrane segments spans residues 10–30, 40–60, 73–93, 94–114, 138–158, 166–186, 209–229, 250–270, 291–311, 321–341, 361–381, and 384–404; these read GLYLVQGLPYGLQSGLLPVLL, VGLAKVLYAPWLLKLAWAPLV, STAGLGLVCGLLAGLPPPGAG, QAGLPAAVAGLLLLLNLGAAM, VQVVAYKLGAALAGGALLALL, LFLLLAATYWLAAALAWAAPA, VLAVPGTVWTAGFVLTYKLGE, LGLWNGVGAVVCSIAGSSLGG, LGGLACQTALVFHLDTLGASM, ALLSLCLQHFLGGLVTTVTFT, LLATLELLGKLLLGTLAGGLA, and LGPHPCFLLLLILSAFPVLYL.

This sequence belongs to the major facilitator superfamily.

Its subcellular location is the membrane. In Homo sapiens (Human), this protein is Major facilitator superfamily domain-containing protein 3 (MFSD3).